The primary structure comprises 812 residues: Lon protease (812 aa).

In terms of domain architecture, Lon N-terminal spans 22-215 (YAVLPLRDIV…KALSFMEAEI (194 aa)). 367–374 (GPPGVGKT) provides a ligand contact to ATP. The region spanning 602–783 (EDQVGVVTGL…GEVLKHALVR (182 aa)) is the Lon proteolytic domain. Active-site residues include Ser689 and Lys732. Residues 787–812 (PIEWTEQENPTAVPPVEDEAGASLAH) are disordered.

This sequence belongs to the peptidase S16 family. As to quaternary structure, homohexamer. Organized in a ring with a central cavity.

The protein localises to the cytoplasm. The catalysed reaction is Hydrolysis of proteins in presence of ATP.. ATP-dependent serine protease that mediates the selective degradation of mutant and abnormal proteins as well as certain short-lived regulatory proteins. Required for cellular homeostasis and for survival from DNA damage and developmental changes induced by stress. Degrades polypeptides processively to yield small peptide fragments that are 5 to 10 amino acids long. Binds to DNA in a double-stranded, site-specific manner. Required for wild-type virulence during the initial stages of infection in the mouse model, but not essential for the establishment and maintenance of chronic infection in this host. This chain is Lon protease, found in Brucella abortus (strain 2308).